The sequence spans 186 residues: NADH-quinone oxidoreductase subunit B 2 (186 aa).

The segment at 1-27 (MPSFTQPHSAPRNFQFPGQQRQGDPTM) is disordered. [4Fe-4S] cluster contacts are provided by cysteine 65, cysteine 66, cysteine 130, and cysteine 160.

This sequence belongs to the complex I 20 kDa subunit family. As to quaternary structure, NDH-1 is composed of 14 different subunits. Subunits NuoB, C, D, E, F, and G constitute the peripheral sector of the complex. [4Fe-4S] cluster is required as a cofactor.

It localises to the cell inner membrane. It catalyses the reaction a quinone + NADH + 5 H(+)(in) = a quinol + NAD(+) + 4 H(+)(out). Functionally, NDH-1 shuttles electrons from NADH, via FMN and iron-sulfur (Fe-S) centers, to quinones in the respiratory chain. The immediate electron acceptor for the enzyme in this species is believed to be ubiquinone. Couples the redox reaction to proton translocation (for every two electrons transferred, four hydrogen ions are translocated across the cytoplasmic membrane), and thus conserves the redox energy in a proton gradient. The sequence is that of NADH-quinone oxidoreductase subunit B 2 from Rhizobium etli (strain ATCC 51251 / DSM 11541 / JCM 21823 / NBRC 15573 / CFN 42).